The chain runs to 455 residues: Kynurenine--oxoglutarate transaminase 3 (455 aa).

G71 contributes to the substrate binding site. Position 116 is an N6-acetyllysine; alternate (K116). K116 is modified (N6-succinyllysine; alternate). N218 lines the substrate pocket. K280 carries the N6-(pyridoxal phosphate)lysine modification. R430 is a substrate binding site.

Belongs to the class-I pyridoxal-phosphate-dependent aminotransferase family. As to quaternary structure, homodimer. Requires pyridoxal 5'-phosphate as cofactor.

It catalyses the reaction L-kynurenine + 2-oxoglutarate = kynurenate + L-glutamate + H2O. The enzyme catalyses L-kynurenine + glyoxylate = kynurenate + glycine + H2O. The catalysed reaction is 3-hydroxy-L-kynurenine + glyoxylate = xanthurenate + glycine + H2O. It carries out the reaction an S-substituted L-cysteine + H2O = a thiol + pyruvate + NH4(+). Its pathway is amino-acid degradation; L-kynurenine degradation; kynurenate from L-kynurenine: step 1/2. Its function is as follows. Catalyzes the irreversible transamination of the L-tryptophan metabolite L-kynurenine to form kynurenic acid (KA), an intermediate in the tryptophan catabolic pathway which is also a broad spectrum antagonist of the three ionotropic excitatory amino acid receptors among others. May catalyze the beta-elimination of S-conjugates and Se-conjugates of L-(seleno)cysteine, resulting in the cleavage of the C-S or C-Se bond. Has transaminase activity towards L-kynurenine, tryptophan, phenylalanine, serine, cysteine, methionine, histidine, glutamine and asparagine with glyoxylate as an amino group acceptor (in vitro). Has lower activity with 2-oxoglutarate as amino group acceptor (in vitro). This Bos taurus (Bovine) protein is Kynurenine--oxoglutarate transaminase 3.